A 251-amino-acid chain; its full sequence is HTH-type transcriptional regulator UlaR (251 aa).

Residues 3–58 (EAQRHQILLDMLAQLGFVTVENVIERLGISPATARRDINKLDESGKLKKVRNGAEA) enclose the HTH deoR-type domain. The segment at residues 20 to 39 (VTVENVIERLGISPATARRD) is a DNA-binding region (H-T-H motif).

Its subcellular location is the cytoplasm. Represses ulaG and the ulaABCDEF operon. The protein is HTH-type transcriptional regulator UlaR of Salmonella agona (strain SL483).